Reading from the N-terminus, the 96-residue chain is Putative pterin-4-alpha-carbinolamine dehydratase (96 aa).

The protein belongs to the pterin-4-alpha-carbinolamine dehydratase family.

The catalysed reaction is (4aS,6R)-4a-hydroxy-L-erythro-5,6,7,8-tetrahydrobiopterin = (6R)-L-erythro-6,7-dihydrobiopterin + H2O. This Paraburkholderia phytofirmans (strain DSM 17436 / LMG 22146 / PsJN) (Burkholderia phytofirmans) protein is Putative pterin-4-alpha-carbinolamine dehydratase.